We begin with the raw amino-acid sequence, 127 residues long: Ribosome-binding factor A (127 aa).

The protein belongs to the RbfA family. In terms of assembly, monomer. Binds 30S ribosomal subunits, but not 50S ribosomal subunits or 70S ribosomes.

The protein localises to the cytoplasm. In terms of biological role, one of several proteins that assist in the late maturation steps of the functional core of the 30S ribosomal subunit. Associates with free 30S ribosomal subunits (but not with 30S subunits that are part of 70S ribosomes or polysomes). Required for efficient processing of 16S rRNA. May interact with the 5'-terminal helix region of 16S rRNA. The polypeptide is Ribosome-binding factor A (Nitrosococcus oceani (strain ATCC 19707 / BCRC 17464 / JCM 30415 / NCIMB 11848 / C-107)).